Here is a 339-residue protein sequence, read N- to C-terminus: ATPase GET3 (339 aa).

34 to 41 (KGGVGKTT) contacts ATP. Asp-63 is a catalytic residue. Glu-243 and Asn-270 together coordinate ATP. Positions 281 and 284 each coordinate Zn(2+).

This sequence belongs to the arsA ATPase family. Homodimer.

The protein localises to the cytoplasm. It is found in the endoplasmic reticulum. Its function is as follows. ATPase required for the post-translational delivery of tail-anchored (TA) proteins to the endoplasmic reticulum. Recognizes and selectively binds the transmembrane domain of TA proteins in the cytosol. This complex then targets to the endoplasmic reticulum by membrane-bound receptors, where the tail-anchored protein is released for insertion. This process is regulated by ATP binding and hydrolysis. ATP binding drives the homodimer towards the closed dimer state, facilitating recognition of newly synthesized TA membrane proteins. ATP hydrolysis is required for insertion. Subsequently, the homodimer reverts towards the open dimer state, lowering its affinity for the membrane-bound receptor, and returning it to the cytosol to initiate a new round of targeting. The protein is ATPase GET3 of Coccidioides immitis (strain RS) (Valley fever fungus).